The sequence spans 658 residues: Threonine--tRNA ligase (658 aa).

In terms of domain architecture, TGS spans 1 to 63 (MDQITITFPD…DDNASIDFVA (63 aa)). The tract at residues 245-548 (DHRKLGRELD…LIEHYAGNFP (304 aa)) is catalytic. Zn(2+) is bound by residues Cys341, His392, and His525.

It belongs to the class-II aminoacyl-tRNA synthetase family. In terms of assembly, homodimer. Zn(2+) serves as cofactor.

It is found in the cytoplasm. The enzyme catalyses tRNA(Thr) + L-threonine + ATP = L-threonyl-tRNA(Thr) + AMP + diphosphate + H(+). Catalyzes the attachment of threonine to tRNA(Thr) in a two-step reaction: L-threonine is first activated by ATP to form Thr-AMP and then transferred to the acceptor end of tRNA(Thr). Also edits incorrectly charged L-seryl-tRNA(Thr). The protein is Threonine--tRNA ligase of Rhodopseudomonas palustris (strain ATCC BAA-98 / CGA009).